The following is a 356-amino-acid chain: Chorismate synthase (356 aa).

NADP(+) contacts are provided by Arg48 and Arg54. Residues Arg125 to Ser127, Asn237 to Ala238, Gly281, Lys296 to Ser300, and Arg322 each bind FMN.

The protein belongs to the chorismate synthase family. In terms of assembly, homotetramer. It depends on FMNH2 as a cofactor.

The catalysed reaction is 5-O-(1-carboxyvinyl)-3-phosphoshikimate = chorismate + phosphate. It participates in metabolic intermediate biosynthesis; chorismate biosynthesis; chorismate from D-erythrose 4-phosphate and phosphoenolpyruvate: step 7/7. Functionally, catalyzes the anti-1,4-elimination of the C-3 phosphate and the C-6 proR hydrogen from 5-enolpyruvylshikimate-3-phosphate (EPSP) to yield chorismate, which is the branch point compound that serves as the starting substrate for the three terminal pathways of aromatic amino acid biosynthesis. This reaction introduces a second double bond into the aromatic ring system. In Novosphingobium aromaticivorans (strain ATCC 700278 / DSM 12444 / CCUG 56034 / CIP 105152 / NBRC 16084 / F199), this protein is Chorismate synthase.